A 426-amino-acid polypeptide reads, in one-letter code: Kelch repeat-containing protein At3g27220 (426 aa).

A helical membrane pass occupies residues 18–38 (LMLVLYFTSVLGIGFIAAFLC). Kelch repeat units lie at residues 123-170 (LLYV…IVTD), 173-222 (YVYV…IWRG), 224-275 (LHVM…VAND), 276-338 (KLLV…WIIV), and 341-394 (SIVI…FWNG).

The protein resides in the membrane. This is Kelch repeat-containing protein At3g27220 from Arabidopsis thaliana (Mouse-ear cress).